The primary structure comprises 897 residues: Leucine--tRNA ligase (897 aa).

Residues 49-59 carry the 'HIGH' region motif; it reads PYPSGKLHMGH. A 'KMSKS' region motif is present at residues 654–658; sequence KMSKS. Lysine 657 lines the ATP pocket.

The protein belongs to the class-I aminoacyl-tRNA synthetase family.

The protein localises to the cytoplasm. The catalysed reaction is tRNA(Leu) + L-leucine + ATP = L-leucyl-tRNA(Leu) + AMP + diphosphate. In Methylibium petroleiphilum (strain ATCC BAA-1232 / LMG 22953 / PM1), this protein is Leucine--tRNA ligase.